We begin with the raw amino-acid sequence, 560 residues long: OTU domain-containing protein 5-A (560 aa).

Disordered regions lie at residues 1–100 (MTIL…MACV) and 141–190 (GGGT…QSED). A compositionally biased stretch (basic and acidic residues) spans 17-32 (DHPDDPDRRTGSDPHQ). Positions 141 to 163 (GGGTGPGAAGGGGGGGGGGGVGG) are enriched in gly residues. Positions 211–334 (FVIKKMKEDG…NIHYNSVVNP (124 aa)) constitute an OTU domain. The segment at 216-222 (MKEDGAC) is cys-loop. Asp-219 is an active-site residue. Cys-222 serves as the catalytic Nucleophile. The segment at 271 to 281 (KRKNNCHGNHI) is variable-loop. The segment at 322–327 (YHRNIH) is his-loop. Residue His-327 is part of the active site. Residues 411–496 (ARQPRKASAT…ACVGPDRPTS (86 aa)) form a disordered region. Low complexity-rich tracts occupy residues 417-430 (ASAT…AASS) and 437-448 (ARSPRQRSSAPS).

The protein belongs to the peptidase C85 family.

The catalysed reaction is Thiol-dependent hydrolysis of ester, thioester, amide, peptide and isopeptide bonds formed by the C-terminal Gly of ubiquitin (a 76-residue protein attached to proteins as an intracellular targeting signal).. Deubiquitinating enzyme that may function as negative regulator of the innate immune system. Has peptidase activity towards 'Lys-48'- and 'Lys-63'-linked polyubiquitin chains. Can also cleave 'Lys-11'-linked ubiquitin chains (in vitro). This chain is OTU domain-containing protein 5-A (otud5a), found in Danio rerio (Zebrafish).